A 364-amino-acid polypeptide reads, in one-letter code: Dual-specificity RNA methyltransferase RlmN (364 aa).

Catalysis depends on E91, which acts as the Proton acceptor. In terms of domain architecture, Radical SAM core spans 102–337 (GTLRITQCLS…AIIRKSKGQD (236 aa)). An intrachain disulfide couples C109 to C342. 3 residues coordinate [4Fe-4S] cluster: C116, C120, and C123. Residues 169–170 (GE), S201, 223–225 (SLH), and N299 contribute to the S-adenosyl-L-methionine site. C342 serves as the catalytic S-methylcysteine intermediate.

It belongs to the radical SAM superfamily. RlmN family. The cofactor is [4Fe-4S] cluster.

The protein localises to the cytoplasm. It carries out the reaction adenosine(2503) in 23S rRNA + 2 reduced [2Fe-2S]-[ferredoxin] + 2 S-adenosyl-L-methionine = 2-methyladenosine(2503) in 23S rRNA + 5'-deoxyadenosine + L-methionine + 2 oxidized [2Fe-2S]-[ferredoxin] + S-adenosyl-L-homocysteine. The catalysed reaction is adenosine(37) in tRNA + 2 reduced [2Fe-2S]-[ferredoxin] + 2 S-adenosyl-L-methionine = 2-methyladenosine(37) in tRNA + 5'-deoxyadenosine + L-methionine + 2 oxidized [2Fe-2S]-[ferredoxin] + S-adenosyl-L-homocysteine. In terms of biological role, specifically methylates position 2 of adenine 2503 in 23S rRNA and position 2 of adenine 37 in tRNAs. m2A2503 modification seems to play a crucial role in the proofreading step occurring at the peptidyl transferase center and thus would serve to optimize ribosomal fidelity. This Nitratidesulfovibrio vulgaris (strain ATCC 29579 / DSM 644 / CCUG 34227 / NCIMB 8303 / VKM B-1760 / Hildenborough) (Desulfovibrio vulgaris) protein is Dual-specificity RNA methyltransferase RlmN.